The primary structure comprises 513 residues: ATP synthase subunit alpha (513 aa).

Residue 169-176 (GDRQTGKT) participates in ATP binding.

It belongs to the ATPase alpha/beta chains family. F-type ATPases have 2 components, CF(1) - the catalytic core - and CF(0) - the membrane proton channel. CF(1) has five subunits: alpha(3), beta(3), gamma(1), delta(1), epsilon(1). CF(0) has three main subunits: a(1), b(2) and c(9-12). The alpha and beta chains form an alternating ring which encloses part of the gamma chain. CF(1) is attached to CF(0) by a central stalk formed by the gamma and epsilon chains, while a peripheral stalk is formed by the delta and b chains.

Its subcellular location is the cell inner membrane. It carries out the reaction ATP + H2O + 4 H(+)(in) = ADP + phosphate + 5 H(+)(out). In terms of biological role, produces ATP from ADP in the presence of a proton gradient across the membrane. The alpha chain is a regulatory subunit. The protein is ATP synthase subunit alpha of Cronobacter sakazakii (strain ATCC BAA-894) (Enterobacter sakazakii).